The chain runs to 329 residues: Serine/threonine-protein phosphatase PP2A catalytic subunit (329 aa).

Residues 1 to 25 (MDNNMEIDAARSPEPHHLSPTTDPG) are disordered. Basic and acidic residues predominate over residues 8 to 17 (DAARSPEPHH). Aspartate 77, histidine 79, aspartate 105, and asparagine 137 together coordinate Mn(2+). Catalysis depends on histidine 138, which acts as the Proton donor. Histidine 187 and histidine 261 together coordinate Mn(2+). Leucine 329 bears the Leucine methyl ester mark.

This sequence belongs to the PPP phosphatase family. PP-2A subfamily. Mn(2+) is required as a cofactor.

It carries out the reaction O-phospho-L-seryl-[protein] + H2O = L-seryl-[protein] + phosphate. The enzyme catalyses O-phospho-L-threonyl-[protein] + H2O = L-threonyl-[protein] + phosphate. Functionally, involved in hyphal morphogenesis. This Emericella nidulans (strain FGSC A4 / ATCC 38163 / CBS 112.46 / NRRL 194 / M139) (Aspergillus nidulans) protein is Serine/threonine-protein phosphatase PP2A catalytic subunit (pphA).